The primary structure comprises 408 residues: Epsin-3 (408 aa).

S2 is modified (N-acetylserine). In terms of domain architecture, ENTH spans 24-157 (NVVFNYTEME…SDDNKIRAER (134 aa)). Positions 162–182 (ETAKKYKGVAGGSASADGSLN) are disordered. 5 positions are modified to phosphoserine: S196, S198, S203, S212, and S223. Disordered stretches follow at residues 199–322 (ADFD…ITPA) and 338–408 (TAKA…LLSF). The span at 201-210 (FDSDNEDNED) shows a compositional bias: acidic residues. The segment covering 211-231 (GSFSQNGYNDNASRATSTPGQ) has biased composition (polar residues). The segment covering 249-263 (KPSKELIQEDEKKAD) has biased composition (basic and acidic residues). The segment covering 264 to 273 (EEEDDDDEFS) has biased composition (acidic residues). Over residues 279–317 (VPVTNPANSFNLLNTSPIEGMPATTSSMPFYNSSTTDQG) the composition is skewed to polar residues. Over residues 338 to 361 (TAKASAEAPSAPKASQAKAAASNP) the composition is skewed to low complexity. Composition is skewed to polar residues over residues 362–371 (VSNSTTALST) and 388–398 (QQEQNTNNNHT). A compositionally biased stretch (basic and acidic residues) spans 399-408 (SSKEIDLLSF).

In terms of assembly, interacts with the clathrin adapter GGA2, and VPS27.

The protein resides in the cytoplasm. It localises to the golgi apparatus. The protein localises to the trans-Golgi network membrane. It is found in the cytoplasmic vesicle. Its subcellular location is the clathrin-coated vesicle membrane. Functionally, involved in the recruitment of clathrin to the Golgi network and endosomes to form clathrin coated vesicles. Plays a role in the trafficking of clathrin between the Golgi network and endosomes. Binds to membranes enriched in phosphatidylinositol-3,5-bisphosphate (PtdIns(3,5)P2) and, in association with VPS27, is involved in protein sorting at the multivesicular body (MVB). This chain is Epsin-3 (ENT3), found in Saccharomyces cerevisiae (strain ATCC 204508 / S288c) (Baker's yeast).